Consider the following 594-residue polypeptide: MEFAAFADRAEELAAEPADIGTTRLVTDLLGAAGGTDENDDDLATVTRFLLGRVFPAHDTRTLDVGPALCREAIARAAGPNVTADDVEDRLAEEGEIGAVAAGFEFGGQRGLAAFGEGRDRLTVAAVDAELRRLAAAAGDGSESHKRDALFGLFNRCEPAEAKVIARLVLGEMRLGVGEGAVRDAIAEAFLAGNPEGDERDESDTDDDPILRAGDEAVVAVERALQVTNDYGRVAVLARDEGLNGLRAEGLAVGRPVQAMLAQAGTATDAVEAFGEVAVETKFDGARVQVHYVPESAAEGDDAAGGTELGPRIYSRNMDDVTDALPEVVEYVEARVSVPVILDGEVVAVDDDGDPLPFQEVLRRFRRKHDVDRMREEVGLRLHAFDCLHADGEDLLDEPFRARHDRLAEVLSDAAASVEFAGDPAAIEAAEAAALGAGHEGVMLKNPEAAYTPGNRGRDWLKRKPDVETLDAVVVGAEWGEGRRAELFGTFLLGVRAGDDELATIGKVATGLTDEELADLTERLEPHVVSEDGTEIEIRPEVVLEVGYEEIQTSPTYSSGYALRFPRFVGVRDDKSVDDADSLERVVRLAGDEK.

E280 serves as a coordination point for ATP. K282 serves as the catalytic N6-AMP-lysine intermediate. Positions 287, 316, 345, 385, 456, and 462 each coordinate ATP.

It belongs to the ATP-dependent DNA ligase family. Mg(2+) is required as a cofactor.

It carries out the reaction ATP + (deoxyribonucleotide)n-3'-hydroxyl + 5'-phospho-(deoxyribonucleotide)m = (deoxyribonucleotide)n+m + AMP + diphosphate.. Its function is as follows. DNA ligase that seals nicks in double-stranded DNA during DNA replication, DNA recombination and DNA repair. This chain is DNA ligase, found in Halorubrum lacusprofundi (strain ATCC 49239 / DSM 5036 / JCM 8891 / ACAM 34).